The chain runs to 262 residues: GTP cyclohydrolase 1 type 2 homolog (262 aa).

5 residues coordinate a divalent metal cation: histidine 64, histidine 65, aspartate 103, histidine 224, and glutamate 228.

Belongs to the GTP cyclohydrolase I type 2/NIF3 family. As to quaternary structure, homohexamer.

This is GTP cyclohydrolase 1 type 2 homolog from Clostridium perfringens (strain 13 / Type A).